Reading from the N-terminus, the 515-residue chain is ATP synthase subunit alpha (515 aa).

169–176 (GDRQTGKT) is an ATP binding site.

This sequence belongs to the ATPase alpha/beta chains family. F-type ATPases have 2 components, CF(1) - the catalytic core - and CF(0) - the membrane proton channel. CF(1) has five subunits: alpha(3), beta(3), gamma(1), delta(1), epsilon(1). CF(0) has three main subunits: a(1), b(2) and c(9-12). The alpha and beta chains form an alternating ring which encloses part of the gamma chain. CF(1) is attached to CF(0) by a central stalk formed by the gamma and epsilon chains, while a peripheral stalk is formed by the delta and b chains.

The protein resides in the cell inner membrane. It catalyses the reaction ATP + H2O + 4 H(+)(in) = ADP + phosphate + 5 H(+)(out). Functionally, produces ATP from ADP in the presence of a proton gradient across the membrane. The alpha chain is a regulatory subunit. The sequence is that of ATP synthase subunit alpha from Neisseria meningitidis serogroup A / serotype 4A (strain DSM 15465 / Z2491).